The following is a 130-amino-acid chain: Small ribosomal subunit protein uS9 (130 aa).

It belongs to the universal ribosomal protein uS9 family.

The sequence is that of Small ribosomal subunit protein uS9 from Bacillus mycoides (strain KBAB4) (Bacillus weihenstephanensis).